The sequence spans 98 residues: UPF0213 protein BPUM_0019 (98 aa).

A GIY-YIG domain is found at 4–79 (HNHYFYVLKC…KTWTRKKKDL (76 aa)).

Belongs to the UPF0213 family.

The protein is UPF0213 protein BPUM_0019 of Bacillus pumilus (strain SAFR-032).